A 534-amino-acid chain; its full sequence is CTP synthase (534 aa).

The tract at residues 1–265 (MKYIVVTGGV…TTRLMKHLKL (265 aa)) is amidoligase domain. CTP is bound at residue Ser-12. Ser-12 contacts UTP. 13–18 (GLGKGI) contacts ATP. An L-glutamine-binding site is contributed by Tyr-53. An ATP-binding site is contributed by Asp-70. Asp-70 and Glu-140 together coordinate Mg(2+). CTP is bound by residues 147–149 (DIE), 186–191 (KTKPSQ), and Lys-222. UTP is bound by residues 186-191 (KTKPSQ) and Lys-222. The Glutamine amidotransferase type-1 domain occupies 289–530 (KLAIVGKYTN…VRAMCKYNKE (242 aa)). Gly-352 contributes to the L-glutamine binding site. The active-site Nucleophile; for glutamine hydrolysis is the Cys-379. Residues 380-383 (LGMQ), Glu-403, and Arg-460 contribute to the L-glutamine site. Active-site residues include His-503 and Glu-505.

This sequence belongs to the CTP synthase family. Homotetramer.

The catalysed reaction is UTP + L-glutamine + ATP + H2O = CTP + L-glutamate + ADP + phosphate + 2 H(+). It catalyses the reaction L-glutamine + H2O = L-glutamate + NH4(+). It carries out the reaction UTP + NH4(+) + ATP = CTP + ADP + phosphate + 2 H(+). It participates in pyrimidine metabolism; CTP biosynthesis via de novo pathway; CTP from UDP: step 2/2. Allosterically activated by GTP, when glutamine is the substrate; GTP has no effect on the reaction when ammonia is the substrate. The allosteric effector GTP functions by stabilizing the protein conformation that binds the tetrahedral intermediate(s) formed during glutamine hydrolysis. Inhibited by the product CTP, via allosteric rather than competitive inhibition. Its function is as follows. Catalyzes the ATP-dependent amination of UTP to CTP with either L-glutamine or ammonia as the source of nitrogen. Regulates intracellular CTP levels through interactions with the four ribonucleotide triphosphates. This is CTP synthase from Methanosarcina acetivorans (strain ATCC 35395 / DSM 2834 / JCM 12185 / C2A).